A 231-amino-acid polypeptide reads, in one-letter code: Octanoyltransferase (231 aa).

Positions 49–224 constitute a BPL/LPL catalytic domain; it reads ADTPDEIWLL…ALQRLLPPVY (176 aa). Residues 88–95, 155–157, and 168–170 each bind substrate; these read RGGQITYH, ALG, and GLA. Cysteine 186 serves as the catalytic Acyl-thioester intermediate.

This sequence belongs to the LipB family.

The protein localises to the cytoplasm. The enzyme catalyses octanoyl-[ACP] + L-lysyl-[protein] = N(6)-octanoyl-L-lysyl-[protein] + holo-[ACP] + H(+). The protein operates within protein modification; protein lipoylation via endogenous pathway; protein N(6)-(lipoyl)lysine from octanoyl-[acyl-carrier-protein]: step 1/2. Functionally, catalyzes the transfer of endogenously produced octanoic acid from octanoyl-acyl-carrier-protein onto the lipoyl domains of lipoate-dependent enzymes. Lipoyl-ACP can also act as a substrate although octanoyl-ACP is likely to be the physiological substrate. This is Octanoyltransferase from Aromatoleum aromaticum (strain DSM 19018 / LMG 30748 / EbN1) (Azoarcus sp. (strain EbN1)).